A 133-amino-acid chain; its full sequence is Small ribosomal subunit protein uS8 (133 aa).

The protein belongs to the universal ribosomal protein uS8 family. As to quaternary structure, part of the 30S ribosomal subunit. Contacts proteins S5 and S12.

One of the primary rRNA binding proteins, it binds directly to 16S rRNA central domain where it helps coordinate assembly of the platform of the 30S subunit. The chain is Small ribosomal subunit protein uS8 from Lachnoclostridium phytofermentans (strain ATCC 700394 / DSM 18823 / ISDg) (Clostridium phytofermentans).